Reading from the N-terminus, the 639-residue chain is MKKLFSYKLSFFVLAVILFWAKTYLSYKTEFNLGVKGTTQEILLIFNPFSSAVFFLGLALLAKGRKSAIIMLIIDFLMTFVLYANILFYRFFDDFLTFPNIKQSGNVGNMGDGIFSIMAGHDIFYFLDIIILIAVLIWRPELKEYKMKKRFASLVILSGIALFFINLHYAEKDRPQLLTRTFDRNYIVKYLGLYNYTIYDGVQTAQTETQRAYASSDDLTSVENYTTSHYAKPNAEYFGSAKGKNIIKIHLESFQSFLIDYKLNGEEVTPFLNKLAHGGEDVTYFDNFFHQTGQGKTSDAELTMDNSIFGLPEGSAFVTKGENTYQSLPAILDQKEGYTSAVLHGDYKSFWNRDQIYKHIGYDKFFDASTYDMSDENVINMGLKDKPFFTESIPKLESLKQPFYAHLITLTNHYPFNLDEKDASLKKATTGDNTVDSYFQTARYLDEALEQFFKELKEAGLYDNSVIMIYGDHNGISENHNRAMKEILGKEITDYQNAQNQRVPLMIRVPGKKGGVNHTYGGEIDVMPTLLHLEGIDSQKYINFGTDLFSKDHDDTVAFRNGDFVTPKYTSVDNIIYDTKTGEKLKANEETKNLKTRVNQQLSLSDSVLYKDLLRFHKLNDFKAVDPSDYHYGKEKEIK.

Topologically, residues 1–3 (MKK) are cytoplasmic. A helical transmembrane segment spans residues 4–24 (LFSYKLSFFVLAVILFWAKTY). Over 25-41 (LSYKTEFNLGVKGTTQE) the chain is Extracellular. Residues 42 to 62 (ILLIFNPFSSAVFFLGLALLA) form a helical membrane-spanning segment. Residues 63–67 (KGRKS) are Cytoplasmic-facing. The chain crosses the membrane as a helical span at residues 68–88 (AIIMLIIDFLMTFVLYANILF). Residues 89-116 (YRFFDDFLTFPNIKQSGNVGNMGDGIFS) lie on the Extracellular side of the membrane. A helical transmembrane segment spans residues 117–137 (IMAGHDIFYFLDIIILIAVLI). Residues 138 to 150 (WRPELKEYKMKKR) are Cytoplasmic-facing. The helical transmembrane segment at 151–171 (FASLVILSGIALFFINLHYAE) threads the bilayer. Residues 172–639 (KDRPQLLTRT…YHYGKEKEIK (468 aa)) are Extracellular-facing. Mn(2+)-binding residues include Glu252 and Thr297. Residue Thr297 is part of the active site. Residue His413 coordinates substrate. 2 residues coordinate Mn(2+): Asp472 and His473.

Belongs to the LTA synthase family. Proteolytically cleaved by the type I signal peptidases SipT and SipV.

It is found in the cell membrane. The protein resides in the secreted. Its pathway is cell wall biogenesis; lipoteichoic acid biosynthesis. In terms of biological role, catalyzes the polymerization of lipoteichoic acid (LTA) polyglycerol phosphate, a reaction that presumably uses phosphatidylglycerol (PG) as substrate. This Bacillus subtilis (strain 168) protein is Lipoteichoic acid synthase 1 (ltaS1).